The sequence spans 231 residues: Histidine biosynthesis bifunctional protein HisIE (231 aa).

The phosphoribosyl-AMP cyclohydrolase stretch occupies residues 1-130; it reads MQDVFRQIDW…QKYPIGVYHI (130 aa). The interval 131 to 231 is phosphoribosyl-ATP pyrophosphohydrolase; that stretch reads LDDLYHIIEQ…GIEEKASRKH (101 aa).

In the N-terminal section; belongs to the PRA-CH family. The protein in the C-terminal section; belongs to the PRA-PH family.

The protein resides in the cytoplasm. The enzyme catalyses 1-(5-phospho-beta-D-ribosyl)-ATP + H2O = 1-(5-phospho-beta-D-ribosyl)-5'-AMP + diphosphate + H(+). The catalysed reaction is 1-(5-phospho-beta-D-ribosyl)-5'-AMP + H2O = 1-(5-phospho-beta-D-ribosyl)-5-[(5-phospho-beta-D-ribosylamino)methylideneamino]imidazole-4-carboxamide. Its pathway is amino-acid biosynthesis; L-histidine biosynthesis; L-histidine from 5-phospho-alpha-D-ribose 1-diphosphate: step 2/9. It participates in amino-acid biosynthesis; L-histidine biosynthesis; L-histidine from 5-phospho-alpha-D-ribose 1-diphosphate: step 3/9. In Helicobacter hepaticus (strain ATCC 51449 / 3B1), this protein is Histidine biosynthesis bifunctional protein HisIE.